The sequence spans 86 residues: Exodeoxyribonuclease 7 small subunit (86 aa).

Belongs to the XseB family. As to quaternary structure, heterooligomer composed of large and small subunits.

The protein resides in the cytoplasm. It catalyses the reaction Exonucleolytic cleavage in either 5'- to 3'- or 3'- to 5'-direction to yield nucleoside 5'-phosphates.. Its function is as follows. Bidirectionally degrades single-stranded DNA into large acid-insoluble oligonucleotides, which are then degraded further into small acid-soluble oligonucleotides. The protein is Exodeoxyribonuclease 7 small subunit of Xanthomonas euvesicatoria pv. vesicatoria (strain 85-10) (Xanthomonas campestris pv. vesicatoria).